We begin with the raw amino-acid sequence, 55 residues long: Large ribosomal subunit protein bL33 (55 aa).

Over residues 1-11 (MAKGGREKIKL) the composition is skewed to basic and acidic residues. The interval 1–29 (MAKGGREKIKLESTAGTGHFYTTTKNKKT) is disordered. Over residues 14–24 (TAGTGHFYTTT) the composition is skewed to polar residues.

Belongs to the bacterial ribosomal protein bL33 family.

The chain is Large ribosomal subunit protein bL33 from Thiobacillus denitrificans (strain ATCC 25259 / T1).